A 449-amino-acid chain; its full sequence is 23S rRNA (uracil(1939)-C(5))-methyltransferase RlmD (449 aa).

In terms of domain architecture, TRAM spans 1–66 (MGRSRHHNKL…AKFDEAKVVE (66 aa)). 4 residues coordinate [4Fe-4S] cluster: Cys-79, Cys-85, Cys-88, and Cys-169. S-adenosyl-L-methionine-binding residues include Gln-280, Phe-309, Asn-314, Glu-330, Asn-357, and Asp-379. The active-site Nucleophile is Cys-405.

This sequence belongs to the class I-like SAM-binding methyltransferase superfamily. RNA M5U methyltransferase family. RlmD subfamily.

The catalysed reaction is uridine(1939) in 23S rRNA + S-adenosyl-L-methionine = 5-methyluridine(1939) in 23S rRNA + S-adenosyl-L-homocysteine + H(+). Catalyzes the formation of 5-methyl-uridine at position 1939 (m5U1939) in 23S rRNA. The sequence is that of 23S rRNA (uracil(1939)-C(5))-methyltransferase RlmD from Francisella tularensis subsp. tularensis (strain FSC 198).